We begin with the raw amino-acid sequence, 119 residues long: Large ribosomal subunit protein bL20 (119 aa).

The protein belongs to the bacterial ribosomal protein bL20 family.

Functionally, binds directly to 23S ribosomal RNA and is necessary for the in vitro assembly process of the 50S ribosomal subunit. It is not involved in the protein synthesizing functions of that subunit. The protein is Large ribosomal subunit protein bL20 of Alkalilimnicola ehrlichii (strain ATCC BAA-1101 / DSM 17681 / MLHE-1).